Here is a 547-residue protein sequence, read N- to C-terminus: MVTDNKTADASFESLLRIFTVPEAPDSTLGIIEKELSQNLNQFLREHIVAEEKPLTEIEKDFTDSSMPESPTYVSEHTEHLLDTLVSQSVHTSAPSFIGHMTSALPYFLMPLSKIMIALNQNLVKIETSKAFTPLERQVLGMLHRLIFGQKDSFYQHWMHSADHSLGAFCSGGTIANITALWVARNRLLKPEGDFEGIAKQGLFAALMHYKCNGLAIFVSERGHYSLKKAADVLGIGQDGVIAVKTDNNNRVCLDDLELKIAQAKAKNIKPLAIVGVAGTTETGSIDPLRELANVAQREGCHFHVDAAWGGATLMSNTYRHLLDGIDLADSVTIDAHKQLYVPMGAGMVIFKDPELMSSIQHHAEYILRKGSKDLGRHTLEGSRSGMAMLLYSCFNVISRPGYELLINQSIEKAHYFADLIQQQDDFELITEPELCLLTYRYVPSNVKAALAIATDEQKIEIYEHLDNLTKYIQKTQRETGKSFVSRTRLTPEAYQHQPTIVFRVVLANPLTTKEILQNVLIEQREIASSSEISLPLLNQIVGNILH.

Lysine 338 bears the N6-(pyridoxal phosphate)lysine mark.

The protein belongs to the group II decarboxylase family. Pyridoxal 5'-phosphate is required as a cofactor.

It catalyses the reaction L-aspartate + H(+) = beta-alanine + CO2. Its pathway is cofactor biosynthesis; (R)-pantothenate biosynthesis; beta-alanine from L-aspartate: step 1/1. Its function is as follows. Catalyzes the pyridoxal-dependent decarboxylation of aspartate to produce beta-alanine. Has weak activity with glutamate. The chain is Aspartate 1-decarboxylase from Aliivibrio fischeri (strain ATCC 700601 / ES114) (Vibrio fischeri).